The chain runs to 300 residues: MEELLSKQREECKELQSKITNLRKQLKEGNKKQKRALQQKISQMEADLSQKHATERQKLDKGDEETNETQQEDLLNTLLQQMEDTKITTAEKSSVQSSLNTKENTPQQPKKSRNRQKERLERRKAEMKKMSEQAELESEKMADLKNEEKKKFSKILEEAGLVAVDIPADGNCLFASISHQLNYHHNVKLNSQALRNKSADYVLKHCEQFEGFLLDEESGEVLPVSDYCNEIRNNSKWGSDIEIQALANSLEVPVHVYNTEGPVLKFNPSTVKFEKPLCIAYYQHLFGLGAHYNSLLYRDN.

2 disordered regions span residues 23–73 (RKQL…QQED) and 89–141 (TAEK…SEKM). Basic and acidic residues predominate over residues 48-61 (LSQKHATERQKLDK). A compositionally biased stretch (acidic residues) spans 62-71 (GDEETNETQQ). A compositionally biased stretch (polar residues) spans 89–109 (TAEKSSVQSSLNTKENTPQQP). Over residues 115-141 (RQKERLERRKAEMKKMSEQAELESEKM) the composition is skewed to basic and acidic residues. One can recognise an OTU domain in the interval 161–298 (LVAVDIPADG…GAHYNSLLYR (138 aa)).

It is found in the cytoplasm. The enzyme catalyses Thiol-dependent hydrolysis of ester, thioester, amide, peptide and isopeptide bonds formed by the C-terminal Gly of ubiquitin (a 76-residue protein attached to proteins as an intracellular targeting signal).. Functionally, hydrolase that can remove conjugated ubiquitin from proteins and may therefore play an important regulatory role at the level of protein turnover by preventing degradation. This chain is Ubiquitin thioesterase otu2 (otu2), found in Schizosaccharomyces pombe (strain 972 / ATCC 24843) (Fission yeast).